Reading from the N-terminus, the 110-residue chain is Parvalbumin alpha (110 aa).

S2 bears the N-acetylserine mark. Phosphoserine occurs at positions 2 and 24. 2 EF-hand domains span residues 39 to 74 (KSADDVKKVFHMLDKDKSGFIEEDELGFILKGFSPD) and 78 to 110 (LSAKETKMLMAAGDKDGDGKIGVDEFSTLVAES). Ca(2+) contacts are provided by D52, D54, S56, F58, E60, E63, D91, D93, D95, K97, and E102.

In terms of biological role, in muscle, parvalbumin is thought to be involved in relaxation after contraction. It binds two calcium ions. The chain is Parvalbumin alpha (PVALB) from Homo sapiens (Human).